Consider the following 920-residue polypeptide: GTPase activating protein homolog 1 (920 aa).

The segment covering N65 to S87 has biased composition (low complexity). Positions N65 to S91 are disordered. Residues L90 to D344 form the F-BAR domain. Positions L184–E276 form a coiled coil. The span at T403 to Q449 shows a compositional bias: low complexity. Disordered regions lie at residues T403–R468 and S490–S518. The span at V450 to R468 shows a compositional bias: polar residues. Low complexity predominate over residues S490–N513. The region spanning V533–K716 is the Rho-GAP domain. The segment at P727–S836 is disordered. Residues P730 to D741 are compositionally biased toward acidic residues. The span at N757 to S836 shows a compositional bias: low complexity.

It is found in the cytoplasm. Its subcellular location is the contractile vacuole. In terms of biological role, rho GTPase-activating protein involved in the signal transduction pathway. Regulator of the contractile vacuole network as well as involved in driving vacuole emptying. The chain is GTPase activating protein homolog 1 (mgp1) from Dictyostelium discoideum (Social amoeba).